The following is a 142-amino-acid chain: Large ribosomal subunit protein uL11 (142 aa).

The protein belongs to the universal ribosomal protein uL11 family. In terms of assembly, part of the ribosomal stalk of the 50S ribosomal subunit. Interacts with L10 and the large rRNA to form the base of the stalk. L10 forms an elongated spine to which L12 dimers bind in a sequential fashion forming a multimeric L10(L12)X complex. In terms of processing, one or more lysine residues are methylated.

Forms part of the ribosomal stalk which helps the ribosome interact with GTP-bound translation factors. This Vibrio campbellii (strain ATCC BAA-1116) protein is Large ribosomal subunit protein uL11.